Consider the following 267-residue polypeptide: Lyso-ornithine lipid O-acyltransferase (267 aa).

Residues 7–27 traverse the membrane as a helical segment; it reads IFLVVAAMVALSLSLIPFQYL.

The protein belongs to the 1-acyl-sn-glycerol-3-phosphate acyltransferase family. OlsA subfamily.

Its subcellular location is the membrane. It catalyses the reaction a lyso-ornithine lipid + a fatty acyl-[ACP] = an N(2)-[(3R)-3-(acyloxy)acyl]-L-ornithine lipid + holo-[ACP]. The protein operates within lipid metabolism. Its function is as follows. Catalyzes the second step in the formation of ornithine lipids, which are phosphorus-free membrane lipids. Uses acyl-acyl carrier protein (acyl-AcpP) as an acyl donor and converts lyso-ornithine lipid (LOL) into ornithine lipid (OL). In Brucella abortus (strain 2308), this protein is Lyso-ornithine lipid O-acyltransferase.